The chain runs to 365 residues: UPF0324 membrane protein Cj0999c (365 aa).

The next 11 membrane-spanning stretches (helical) occupy residues 12–34 (IVRS…MYLS), 44–63 (HLAA…PWFF), 83–100 (LGIV…LLSV), 105–127 (FLLS…TKIF), 134–153 (SMLV…LALE), 163–185 (GILA…PIAF), 197–219 (AMGV…AEMA), 234–256 (VIIK…YFFA), 269–288 (SITI…LNTY), 303–325 (IISL…LGLQ), and 338–360 (VFGL…TLAF).

This sequence belongs to the UPF0324 family.

The protein localises to the cell membrane. The protein is UPF0324 membrane protein Cj0999c of Campylobacter jejuni subsp. jejuni serotype O:2 (strain ATCC 700819 / NCTC 11168).